The sequence spans 196 residues: Molybdenum cofactor guanylyltransferase (196 aa).

GTP is bound by residues 10-12 (LAG), Lys-23, Asn-51, Asp-69, and Asp-99. Asp-99 contributes to the Mg(2+) binding site.

Belongs to the MobA family. As to quaternary structure, monomer. It depends on Mg(2+) as a cofactor.

It localises to the cytoplasm. The catalysed reaction is Mo-molybdopterin + GTP + H(+) = Mo-molybdopterin guanine dinucleotide + diphosphate. Functionally, transfers a GMP moiety from GTP to Mo-molybdopterin (Mo-MPT) cofactor (Moco or molybdenum cofactor) to form Mo-molybdopterin guanine dinucleotide (Mo-MGD) cofactor. The sequence is that of Molybdenum cofactor guanylyltransferase from Shewanella baltica (strain OS185).